The primary structure comprises 330 residues: MVREKVKVSTSTRTRQWKCVESRTDSKRLYYGRFILSPLMKGQADTIGIAMRRALLGELEGTCITRAKSEKIPHEYSTIVGIQESVHEILMNLKEIVLRGNLYGTRNAFICAKGPGYVTAQDIILPPSVEIVDNTQHVASLTEPIDLCIGLQIERNRGYGIKTPKNFHDGSYPIDAVFMPVRNANHSIHCYGNDNEKQEILFLEIWTNGSLTPKEALHEASRNLIDLFIHFLHAKEENLHLENNQHDVTLHFFFPFHYRLVKLTKKKKEIALKYIFIDQSELPPRIYNCLKKSNIHTLLDLLNNSREDLMKMEHFRIEDVKQILGILEKK.

An alpha N-terminal domain (alpha-NTD) region spans residues 1–235 (MVREKVKVST…DLFIHFLHAK (235 aa)). The alpha C-terminal domain (alpha-CTD) stretch occupies residues 270-330 (IALKYIFIDQ…KQILGILEKK (61 aa)).

Belongs to the RNA polymerase alpha chain family. In plastids the minimal PEP RNA polymerase catalytic core is composed of four subunits: alpha, beta, beta', and beta''. When a (nuclear-encoded) sigma factor is associated with the core the holoenzyme is formed, which can initiate transcription.

The protein localises to the plastid. Its subcellular location is the chloroplast. The catalysed reaction is RNA(n) + a ribonucleoside 5'-triphosphate = RNA(n+1) + diphosphate. DNA-dependent RNA polymerase catalyzes the transcription of DNA into RNA using the four ribonucleoside triphosphates as substrates. In Gossypium barbadense (Sea Island cotton), this protein is DNA-directed RNA polymerase subunit alpha (rpoA).